The chain runs to 126 residues: Phosphoribosyl-AMP cyclohydrolase (126 aa).

Residue Asp82 participates in Mg(2+) binding. Position 83 (Cys83) interacts with Zn(2+). Mg(2+)-binding residues include Asp84 and Asp86. Cys99 and Cys106 together coordinate Zn(2+).

Belongs to the PRA-CH family. Homodimer. It depends on Mg(2+) as a cofactor. The cofactor is Zn(2+).

The protein resides in the cytoplasm. The enzyme catalyses 1-(5-phospho-beta-D-ribosyl)-5'-AMP + H2O = 1-(5-phospho-beta-D-ribosyl)-5-[(5-phospho-beta-D-ribosylamino)methylideneamino]imidazole-4-carboxamide. It functions in the pathway amino-acid biosynthesis; L-histidine biosynthesis; L-histidine from 5-phospho-alpha-D-ribose 1-diphosphate: step 3/9. Catalyzes the hydrolysis of the adenine ring of phosphoribosyl-AMP. In Micrococcus luteus (strain ATCC 4698 / DSM 20030 / JCM 1464 / CCM 169 / CCUG 5858 / IAM 1056 / NBRC 3333 / NCIMB 9278 / NCTC 2665 / VKM Ac-2230) (Micrococcus lysodeikticus), this protein is Phosphoribosyl-AMP cyclohydrolase.